We begin with the raw amino-acid sequence, 600 residues long: Cationic amino acid transporter 4, vacuolar (600 aa).

At Met1–Asp32 the chain is on the cytoplasmic side. The chain crosses the membrane as a helical span at residues Leu33–Val53. Topologically, residues Ala54–Pro60 are vacuolar. Residues Ala61 to Ala81 form a helical membrane-spanning segment. Residues Glu82 to Ser92 are Cytoplasmic-facing. A helical membrane pass occupies residues Ala93–Leu115. Residues Asp116–Pro152 lie on the Vacuolar side of the membrane. The chain crosses the membrane as a helical span at residues Gly153 to Leu173. At Cys174–Gln184 the chain is on the cytoplasmic side. Residues Ala185–Leu205 form a helical membrane-spanning segment. The Vacuolar segment spans residues Ala206–Tyr220. Residues Phe221–Gly241 form a helical membrane-spanning segment. Residues Phe242–Gly264 are Cytoplasmic-facing. Residues Ile265–Val285 traverse the membrane as a helical segment. Over Pro286–Ala308 the chain is Vacuolar. Residues Ala309–Leu329 traverse the membrane as a helical segment. The Cytoplasmic portion of the chain corresponds to Ala330 to Lys360. A helical membrane pass occupies residues Ser361 to Leu381. A topological domain (vacuolar) is located at residue Ser382. Residues Glu383 to Leu403 traverse the membrane as a helical segment. Residues Arg404–Lys462 lie on the Cytoplasmic side of the membrane. Residues Ile463–Ser483 form a helical membrane-spanning segment. At Ala484–Arg492 the chain is on the vacuolar side. The chain crosses the membrane as a helical span at residues Phe493–Ile513. Topologically, residues Asp514–Phe528 are cytoplasmic. The helical transmembrane segment at Leu529–Ile549 threads the bilayer. Asn550 is a topological domain (vacuolar). Residues Ile551–Ile571 form a helical membrane-spanning segment. Residues Phe572–Ala600 lie on the Cytoplasmic side of the membrane.

This sequence belongs to the amino acid-polyamine-organocation (APC) superfamily. Cationic amino acid transporter (CAT) (TC 2.A.3.3) family. In terms of tissue distribution, expressed in roots, stems, flowers, and leaves.

The protein resides in the vacuole membrane. Functionally, permease involved in the transport of the cationic amino acids. This Arabidopsis thaliana (Mouse-ear cress) protein is Cationic amino acid transporter 4, vacuolar (CAT4).